The primary structure comprises 442 residues: Chromosomal replication initiator protein DnaA (442 aa).

Residues 1 to 69 (METLWDGILS…AQAGEQVIGR (69 aa)) are domain I, interacts with DnaA modulators. Residues 69 to 103 (RPIQVDFIVSEQSEEALKPVIEREPAPAAPPANVA) form a domain II region. The segment at 104–320 (SLNSKYTFSR…GALIRAVAYV (217 aa)) is domain III, AAA+ region. ATP is bound by residues glycine 148, glycine 150, lysine 151, and threonine 152. Residues 321 to 442 (SISGLPMTVE…GNRLEADARH (122 aa)) form a domain IV, binds dsDNA region.

It belongs to the DnaA family. As to quaternary structure, oligomerizes as a right-handed, spiral filament on DNA at oriC.

It localises to the cytoplasm. Its function is as follows. Plays an essential role in the initiation and regulation of chromosomal replication. ATP-DnaA binds to the origin of replication (oriC) to initiate formation of the DNA replication initiation complex once per cell cycle. Binds the DnaA box (a 9 base pair repeat at the origin) and separates the double-stranded (ds)DNA. Forms a right-handed helical filament on oriC DNA; dsDNA binds to the exterior of the filament while single-stranded (ss)DNA is stabiized in the filament's interior. The ATP-DnaA-oriC complex binds and stabilizes one strand of the AT-rich DNA unwinding element (DUE), permitting loading of DNA polymerase. After initiation quickly degrades to an ADP-DnaA complex that is not apt for DNA replication. Binds acidic phospholipids. In Gloeobacter violaceus (strain ATCC 29082 / PCC 7421), this protein is Chromosomal replication initiator protein DnaA.